We begin with the raw amino-acid sequence, 414 residues long: Putative competence-damage inducible protein (414 aa).

The protein belongs to the CinA family.

This Listeria monocytogenes serovar 1/2a (strain ATCC BAA-679 / EGD-e) protein is Putative competence-damage inducible protein.